The chain runs to 505 residues: Cytochrome P450 9b1 (505 aa).

C449 provides a ligand contact to heme.

Belongs to the cytochrome P450 family. Heme serves as cofactor.

It is found in the endoplasmic reticulum membrane. The protein localises to the microsome membrane. Functionally, may be involved in the metabolism of insect hormones and in the breakdown of synthetic insecticides. The polypeptide is Cytochrome P450 9b1 (Cyp9b1) (Drosophila melanogaster (Fruit fly)).